The sequence spans 196 residues: Imidazole glycerol phosphate synthase subunit HisH (196 aa).

Residues 2-196 enclose the Glutamine amidotransferase type-1 domain; the sequence is KVAVIKYNAG…ERIIKNFLEL (195 aa). The active-site Nucleophile is C77. Active-site residues include H178 and E180.

As to quaternary structure, heterodimer of HisH and HisF.

Its subcellular location is the cytoplasm. It catalyses the reaction 5-[(5-phospho-1-deoxy-D-ribulos-1-ylimino)methylamino]-1-(5-phospho-beta-D-ribosyl)imidazole-4-carboxamide + L-glutamine = D-erythro-1-(imidazol-4-yl)glycerol 3-phosphate + 5-amino-1-(5-phospho-beta-D-ribosyl)imidazole-4-carboxamide + L-glutamate + H(+). It carries out the reaction L-glutamine + H2O = L-glutamate + NH4(+). It participates in amino-acid biosynthesis; L-histidine biosynthesis; L-histidine from 5-phospho-alpha-D-ribose 1-diphosphate: step 5/9. Functionally, IGPS catalyzes the conversion of PRFAR and glutamine to IGP, AICAR and glutamate. The HisH subunit catalyzes the hydrolysis of glutamine to glutamate and ammonia as part of the synthesis of IGP and AICAR. The resulting ammonia molecule is channeled to the active site of HisF. This is Imidazole glycerol phosphate synthase subunit HisH from Bacteroides fragilis (strain YCH46).